We begin with the raw amino-acid sequence, 21 residues long: Maculatin-1.1 (21 aa).

Phenylalanine 21 is subject to Phenylalanine amide.

In terms of tissue distribution, expressed by the skin dorsal glands.

It is found in the secreted. Maculatin-1.1 shows significant antibacterial activity against Gram-positive bacteria, less against Gram-negative bacteria. Maculatin-1.1.1 is inactive. The sequence is that of Maculatin-1.1 from Ranoidea genimaculata (Brown-spotted tree frog).